Consider the following 75-residue polypeptide: Mu-conotoxin GIIIA (75 aa).

A signal peptide spans 1–20 (MMSKLGVLLTICLLLFPLTA). The propeptide occupies 21–51 (LPMDGDEPANRPVERMQDNISSEQYPLFEKR). 3 disulfides stabilise this stretch: C54-C66, C55-C71, and C61-C72. 2 positions are modified to 4-hydroxyproline; partial: P57 and P58. P68 bears the 4-hydroxyproline mark. An Alanine amide modification is found at A73.

It belongs to the conotoxin M superfamily. Post-translationally, hydroxylated; hydroxylations improve the ability to block Nav1.4/SCN4A sodium channels but does not affect folding. Expressed by the venom duct.

Its subcellular location is the secreted. Functionally, mu-conotoxins block voltage-gated sodium channels (Nav). This toxin potently blocks rat Nav1.4/SCN4A (IC(50)= 19-110 nM). It also moderately blocks rNav1.1/SCN1A (Kd=260 nM), rNav1.2/SCN2A (IC(50)=2.7-17.8 uM), and mNav1.6/SCN8A (IC(50)=680 nM). The inhibition is reversible. In vivo, induces paralysis to an isolated skeletal muscle preparation from frog (cutaneous pectoralis) within a few minutes. This Conus geographus (Geography cone) protein is Mu-conotoxin GIIIA.